We begin with the raw amino-acid sequence, 497 residues long: Uridine 5'-monophosphate synthase (497 aa).

The OPRTase stretch occupies residues 8–226; sequence TRNGALKRNL…KLEINSELEN (219 aa). Residues 227-232 form a domain linker region; that stretch reads LSSLPY. Positions 233-496 are OMPdecase; sequence VENVRTPLAE…WDALTRSDDS (264 aa). Residues D271 and 293–295 each bind UMP; that span reads KLH. Residue K293 coordinates orotidine 5'-phosphate. Active-site for OMPdecase activity residues include D324, K326, and D329. Orotidine 5'-phosphate is bound by residues K326, D329, T333, S387, 446–448, and 466–467; these read QQW and GR. UMP contacts are provided by residues D329, T333, S387, 446–448, and 466–467; these read QQW and GR.

It in the N-terminal section; belongs to the purine/pyrimidine phosphoribosyltransferase family. In the C-terminal section; belongs to the OMP decarboxylase family. In terms of tissue distribution, expressed in intestine and in neurons near the nerve ring and rectum.

It localises to the cytoplasm. It carries out the reaction orotidine 5'-phosphate + diphosphate = orotate + 5-phospho-alpha-D-ribose 1-diphosphate. The catalysed reaction is orotidine 5'-phosphate + H(+) = UMP + CO2. Its pathway is pyrimidine metabolism; UMP biosynthesis via de novo pathway; UMP from orotate: step 1/2. It participates in pyrimidine metabolism; UMP biosynthesis via de novo pathway; UMP from orotate: step 2/2. Functionally, bifunctional enzyme which catalyzes the formation of UMP from orotate in the de novo pathway of pyrimidine biosynthesis. May also form UMP from uracil. Regulates the size of gut granules during embryonic development. Involved in resistance to DNA damaging agents including UV-C and X-ray radiation. In Caenorhabditis elegans, this protein is Uridine 5'-monophosphate synthase.